The primary structure comprises 234 residues: UPF0502 protein BPSS1373 (234 aa).

The protein belongs to the UPF0502 family.

The sequence is that of UPF0502 protein BPSS1373 from Burkholderia pseudomallei (strain K96243).